The primary structure comprises 547 residues: Mercuric reductase (547 aa).

The region spanning 4-67 is the HMA domain; sequence NSYKIPIQGM…NISAAGYQPG (64 aa). 2 residues coordinate a metal cation: Cys15 and Cys18. Residues Ala97, Gly117, and Thr122 each coordinate FAD. A disulfide bridge links Cys123 with Cys128. Lys132, Ala196, Asp388, and Val396 together coordinate FAD. Positions 544 and 545 each coordinate Hg(2+).

This sequence belongs to the class-I pyridine nucleotide-disulfide oxidoreductase family. Homodimer. FAD serves as cofactor.

The catalysed reaction is Hg + NADP(+) + H(+) = Hg(2+) + NADPH. Its function is as follows. Resistance to Hg(2+) in bacteria appears to be governed by a specialized system which includes mercuric reductase. MerA protein is responsible for volatilizing mercury as Hg(0). This is Mercuric reductase (merA) from Staphylococcus aureus.